A 253-amino-acid chain; its full sequence is Ubiquinone biosynthesis O-methyltransferase (253 aa).

S-adenosyl-L-methionine is bound by residues Arg47, Gly78, Asp99, and Met141.

Belongs to the methyltransferase superfamily. UbiG/COQ3 family.

It carries out the reaction a 3-demethylubiquinol + S-adenosyl-L-methionine = a ubiquinol + S-adenosyl-L-homocysteine + H(+). It catalyses the reaction a 3-(all-trans-polyprenyl)benzene-1,2-diol + S-adenosyl-L-methionine = a 2-methoxy-6-(all-trans-polyprenyl)phenol + S-adenosyl-L-homocysteine + H(+). Its pathway is cofactor biosynthesis; ubiquinone biosynthesis. Its function is as follows. O-methyltransferase that catalyzes the 2 O-methylation steps in the ubiquinone biosynthetic pathway. This Rhodopseudomonas palustris (strain BisB5) protein is Ubiquinone biosynthesis O-methyltransferase.